Reading from the N-terminus, the 196-residue chain is Charged multivesicular body protein 1a (196 aa).

An N-acetylmethionine modification is found at Met-1. Residues 5-47 (LFQLKFTAKQLEKLAKKAEKDSKAEQAKVKKALLQKNVECARV) are a coiled coil. Residue Ser-101 is modified to Phosphoserine. Residues 102 to 124 (TMDLQKVSSVMDRFEQQVQNLDV) are a coiled coil. Residue Ser-173 is modified to Phosphoserine. The disordered stretch occupies residues 173 to 196 (SAVGESSVRSQEDQLSRRLAALRN). Positions 185 to 195 (DQLSRRLAALR) match the MIT-interacting motif motif.

Belongs to the SNF7 family. As to quaternary structure, probable peripherally associated component of the endosomal sorting required for transport complex III (ESCRT-III). ESCRT-III components are thought to multimerize to form a flat lattice on the perimeter membrane of the endosome. Several assembly forms of ESCRT-III may exist that interact and act sequentially. Self-associates. Interacts with CHMP1B. Interacts with VPS4A. Interacts with VPS4B. Interacts with PHF1. Interacts with IST1. Interacts with MITD1. As to expression, expressed in placenta, cultured skin fibroblasts and in osteoblast cell line MG-63.

It localises to the cytoplasm. The protein localises to the endosome membrane. It is found in the nucleus matrix. Probable peripherally associated component of the endosomal sorting required for transport complex III (ESCRT-III) which is involved in multivesicular bodies (MVBs) formation and sorting of endosomal cargo proteins into MVBs. MVBs contain intraluminal vesicles (ILVs) that are generated by invagination and scission from the limiting membrane of the endosome and mostly are delivered to lysosomes enabling degradation of membrane proteins, such as stimulated growth factor receptors, lysosomal enzymes and lipids. The MVB pathway appears to require the sequential function of ESCRT-O, -I,-II and -III complexes. ESCRT-III proteins mostly dissociate from the invaginating membrane before the ILV is released. The ESCRT machinery also functions in topologically equivalent membrane fission events, such as the terminal stages of cytokinesis and the budding of enveloped viruses (HIV-1 and other lentiviruses). ESCRT-III proteins are believed to mediate the necessary vesicle extrusion and/or membrane fission activities, possibly in conjunction with the AAA ATPase VPS4. Involved in cytokinesis. Involved in recruiting VPS4A and/or VPS4B to the midbody of dividing cells. May also be involved in chromosome condensation. Targets the Polycomb group (PcG) protein BMI1/PCGF4 to regions of condensed chromatin. May play a role in stable cell cycle progression and in PcG gene silencing. The polypeptide is Charged multivesicular body protein 1a (CHMP1A) (Homo sapiens (Human)).